The sequence spans 332 residues: Formamidase (332 aa).

The region spanning 14 to 259 (FLAALIQYPV…WEIVTAEVYP (246 aa)) is the CN hydrolase domain. Glu-60 functions as the Proton acceptor in the catalytic mechanism. The Proton donor role is filled by Lys-132. Cys-165 acts as the Nucleophile in catalysis.

The protein belongs to the carbon-nitrogen hydrolase superfamily. Aliphatic amidase family.

It carries out the reaction formamide + H2O = formate + NH4(+). In terms of biological role, is an aliphatic amidase with a restricted substrate specificity, as it only hydrolyzes formamide. In Bacillus cereus (strain Q1), this protein is Formamidase.